Here is a 319-residue protein sequence, read N- to C-terminus: Acetyl-coenzyme A carboxylase carboxyl transferase subunit beta, chloroplastic (319 aa).

The CoA carboxyltransferase N-terminal domain occupies 47–319 (LWVQCDNCES…ELFYVLQSSS (273 aa)). Positions 51, 54, 70, and 73 each coordinate Zn(2+). The C4-type zinc finger occupies 51-73 (CDNCESLLYIRFLRENKSVCEEC).

This sequence belongs to the AccD/PCCB family. As to quaternary structure, acetyl-CoA carboxylase is a heterohexamer composed of biotin carboxyl carrier protein, biotin carboxylase and 2 subunits each of ACCase subunit alpha and ACCase plastid-coded subunit beta (accD). Zn(2+) is required as a cofactor.

The protein localises to the plastid. It is found in the chloroplast stroma. It catalyses the reaction N(6)-carboxybiotinyl-L-lysyl-[protein] + acetyl-CoA = N(6)-biotinyl-L-lysyl-[protein] + malonyl-CoA. It participates in lipid metabolism; malonyl-CoA biosynthesis; malonyl-CoA from acetyl-CoA: step 1/1. Component of the acetyl coenzyme A carboxylase (ACC) complex. Biotin carboxylase (BC) catalyzes the carboxylation of biotin on its carrier protein (BCCP) and then the CO(2) group is transferred by the transcarboxylase to acetyl-CoA to form malonyl-CoA. This is Acetyl-coenzyme A carboxylase carboxyl transferase subunit beta, chloroplastic from Picea abies (Norway spruce).